The chain runs to 215 residues: uncharacterized protein (215 aa).

Residues Ser-114, Asp-162, and His-194 each act as charge relay system in the active site.

The protein belongs to the AB hydrolase superfamily. AB hydrolase 2 family.

This is an uncharacterized protein from Rickettsia felis (strain ATCC VR-1525 / URRWXCal2) (Rickettsia azadi).